A 130-amino-acid chain; its full sequence is Small ribosomal subunit protein uS8 (130 aa).

This sequence belongs to the universal ribosomal protein uS8 family. As to quaternary structure, part of the 30S ribosomal subunit. Contacts proteins S5 and S12.

Functionally, one of the primary rRNA binding proteins, it binds directly to 16S rRNA central domain where it helps coordinate assembly of the platform of the 30S subunit. The polypeptide is Small ribosomal subunit protein uS8 (Cereibacter sphaeroides (strain KD131 / KCTC 12085) (Rhodobacter sphaeroides)).